The primary structure comprises 248 residues: MHKLVLIRHGESTWNLENRFTGWVDVDLTDTGIAQARQGGRLLREAGFTFDLAYTSVLKRAIRTLWHVQDEMDLMWIPTRTEWRLNERHYGGLSGLNKAETAAQYGDQQVLVWRRSYDTPPPALEAGDERDAYGNPRYAGLPREQVPLTECLKDTVARVLPLWETSIAPDIKSGKRVVIAAHGNSIRALVKYLDNISDDDIVGLNIPNGTPLVYELDANLKPIRHYYLGDQEAIAASLAAVAGQGKAK.

Substrate contacts are provided by residues 8-15 (RHGESTWN), 21-22 (TG), R60, 87-90 (ERHY), K98, 114-115 (RR), and 183-184 (GN). The Tele-phosphohistidine intermediate role is filled by H9. Catalysis depends on E87, which acts as the Proton donor/acceptor.

This sequence belongs to the phosphoglycerate mutase family. BPG-dependent PGAM subfamily. In terms of assembly, homodimer.

The enzyme catalyses (2R)-2-phosphoglycerate = (2R)-3-phosphoglycerate. The protein operates within carbohydrate degradation; glycolysis; pyruvate from D-glyceraldehyde 3-phosphate: step 3/5. Functionally, catalyzes the interconversion of 2-phosphoglycerate and 3-phosphoglycerate. The polypeptide is 2,3-bisphosphoglycerate-dependent phosphoglycerate mutase (Ralstonia nicotianae (strain ATCC BAA-1114 / GMI1000) (Ralstonia solanacearum)).